The sequence spans 288 residues: Inositol monophosphatase 2 (288 aa).

Positions 81, 101, 103, and 104 each coordinate Mg(2+). Residue glutamate 81 coordinates substrate. Residues 103–106, 205–207, glutamine 224, and aspartate 231 contribute to the substrate site; these read IDGT and GSS. Aspartate 231 provides a ligand contact to Mg(2+).

Belongs to the inositol monophosphatase superfamily. Homodimer. Mg(2+) is required as a cofactor.

It is found in the cytoplasm. It catalyses the reaction a myo-inositol phosphate + H2O = myo-inositol + phosphate. The enzyme catalyses 1D-myo-inositol 1-phosphate + H2O = myo-inositol + phosphate. The catalysed reaction is 1D-myo-inositol 2-phosphate + H2O = myo-inositol + phosphate. It carries out the reaction 1D-myo-inositol 3-phosphate + H2O = myo-inositol + phosphate. It catalyses the reaction 1D-myo-inositol 4-phosphate + H2O = myo-inositol + phosphate. The enzyme catalyses 1D-myo-inositol 5-phosphate + H2O = myo-inositol + phosphate. The catalysed reaction is 1D-myo-inositol 6-phosphate + H2O = myo-inositol + phosphate. It carries out the reaction alpha-D-glucose 1-phosphate + H2O = D-glucose + phosphate. It catalyses the reaction glycerol 2-phosphate + H2O = glycerol + phosphate. The enzyme catalyses adenosine 2'-phosphate + H2O = adenosine + phosphate. Its pathway is polyol metabolism; myo-inositol biosynthesis; myo-inositol from D-glucose 6-phosphate: step 2/2. With respect to regulation, inhibited by high Li(+) and restricted Mg(2+) concentrations. Functionally, phosphatase that can use myo-inositol monophosphates, myo-inositol 1,4-diphosphate, scyllo-inositol-1,4-diphosphate, glucose-1-phosphate, beta-glycerophosphate and 2'-AMP as substrates in vitro. It is likely that IMPA2 has an as yet unidentified in vivo substrate(s). Has been implicated as the pharmacological target for lithium (Li(+)) action in brain. In Homo sapiens (Human), this protein is Inositol monophosphatase 2.